Consider the following 199-residue polypeptide: Neurotrophic factor BDNF precursor form (199 aa).

A disordered region spans residues 1–23 (GQGSLAYPGLRTQGNLETLSGPN). Residues 1–100 (GQGSLAYPGL…AANMSMRVRR (100 aa)) constitute a propeptide that is removed on maturation. A compositionally biased stretch (polar residues) spans 12-23 (TQGNLETLSGPN). N-linked (GlcNAc...) asparagine glycosylation is present at asparagine 93. Cysteine 113 and cysteine 180 form a disulfide bridge.

Belongs to the NGF-beta family.

The protein resides in the secreted. Functionally, promotes the survival of neuronal populations that are all located either in the central nervous system or directly connected to it. This is Neurotrophic factor BDNF precursor form (BDNF) from Morelia spilota (Carpet python).